We begin with the raw amino-acid sequence, 304 residues long: HTH-type transcriptional regulator BenM (304 aa).

One can recognise an HTH lysR-type domain in the interval M1 to T58. The segment at residues F18–Q37 is a DNA-binding region (H-T-H motif). Benzoate contacts are provided by S99 and L104. S99 is a binding site for cis,cis-muconate. A cis,cis-muconate-binding site is contributed by T128. Benzoate is bound by residues F144, R160, and N202. A cis,cis-muconate-binding site is contributed by F203. Y293 is a benzoate binding site.

The protein belongs to the LysR transcriptional regulatory family. Homotetramer; dimer of dimers. The dimers can also associate to form linear, higher oligomers (in vitro).

Its function is as follows. Positive regulator of the ben and cat genes for benzoate degradation. BenM is necessary for ben gene expression but not for expression of the cat genes, which can be regulated by CatM. Binds to the inducers cis,cis-muconate and benzoate. This Acinetobacter baylyi (strain ATCC 33305 / BD413 / ADP1) protein is HTH-type transcriptional regulator BenM (benM).